Reading from the N-terminus, the 1439-residue chain is MASSETEIRWAEPGLGKGPQRRRWAWAEDKRDVDRSSSQSWEEERLFPNATSPELLEDFRLAQQHLPPLEWDPHPQPDGHQDSESGETSGEEAEAEDVDSPASSHEPLAWLPQQGRQLDMTEEEPDGTLGSLEVEEAGESSSRLGYEAGLSLEGHGNTSPMALGHGQARGWVASGEQASGDKLSEHSEVNPSVELSPARSWSSGTVSLDHPSDSLDSTWEGETDGPQPTALAETLPEGPSHHLLSPDGRTGGSVARATPMEFQDSSAPPAQSPQHATDRWRRETTRFFCPQPKEHIWKQTKTSPKPLPSRFIGSISPLNPQPRPTRQGRPLPRQGATLAGRSSSNAPKYGRGQLNYPLPDFSKVGPRVRFPKDESYRPPKSRSHNRKPQAPARPLIFKSPAEIVQEVLLSSGEAALAKDTPPAHPITRVPQEFQTPEQATELVHQLQEDYHRLLTKYAEAENTIDQLRLGAKVNLFSDPPQPNHSIHTGMVPQGTKVLSFTIPQPRSAEWWPGPAEDPQASAASGWPSARGDLSPSSLTSMPTLGWLPENRDISEDQSSAEQTQALASQASQFLAKVESFERLIQAGRLMPQDQVKGFQRLKAAHAALEEEYLKACREQHPAQPLAGSKGTPGRFDPRRELEAEIYRLGSCLEELKEHIDQTQQEPEPPGSDSALDSTPALPCLHQPTHLPAPSGQAPMPAIKTSCPEPATTTAAASTGPCPLHVNVEVSSGNSEVEDRPQDPLARLRHKELQMEQVYHGLMERYLSVKSLPEAMRMEEEEEGEEEEEEEGGGDSLEVDGVAATPGKAEATRVLPRQCPVQAEKSHGAPLEEATEKMVSMKPPGFQASLARDGHMSGLGKAEAAPPGPGVPPHPPGTKSAASHQSSMTSLEGSGISERLPQKPLHRGGGPHLEETWMASPETDSGFVGSETSRVSPLTQTPEHRLSHISTAGTLAQPFAASVPRDGASYPKARGSLIPRRATEPSTPRSQAQRYLSSPSGPLRQRAPNFSLERTLAAEMAVPGSEFEGHKRISEQPLPNKTISPPPAPAPAAAPLPCGPTETIPSFLLTRAGRDQAICELQEEVSRLRLRLEDSLHQPLQGSPTRPASAFDRPARTRGRPADSPATWGSHYGSKSTERLPGEPRGEEQIVPPGRQRARSSSVPREVLRLSLSSESELPSLPLFSEKSKTTKDSPQAARDGKRGVGSAGWPDRVTFRGQYTGHEYHVLSPKAVPKGNGTVSCPHCRPIRTQDAGGAVTGDPLGPPPADTLQCPLCGQVGSPPEADGPGSATSGAEKATTRRKASSTPSPKQRSKQAGSSPRPPPGLWYLATAPPAPAPPAFAYISSVPIMPYPPAAVYYAPAGPTSAQPAAKWPPTASPPPARRHRHSIQLDLGDLEELNKALSRAVQAAESVRSTTRQMRSSLSADLRQAHSLRGSCLF.

Composition is skewed to basic and acidic residues over residues 1 to 10 (MASSETEIRW) and 25 to 35 (AWAEDKRDVDR). Positions 1 to 394 (MASSETEIRW…NRKPQAPARP (394 aa)) are disordered. The residue at position 52 (serine 52) is a Phosphoserine. Over residues 71–83 (WDPHPQPDGHQDS) the composition is skewed to basic and acidic residues. Over residues 89–99 (SGEEAEAEDVD) the composition is skewed to acidic residues. Polar residues predominate over residues 263–275 (QDSSAPPAQSPQH). Positions 276–285 (ATDRWRRETT) are enriched in basic and acidic residues. A phosphoserine mark is found at serine 316, serine 499, and serine 534. Disordered regions lie at residues 507 to 562 (SAEW…SAEQ) and 659 to 682 (IDQTQQEPEPPGSDSALDSTPALP). Low complexity predominate over residues 533 to 544 (LSPSSLTSMPTL). Residues serine 767 and serine 770 each carry the phosphoserine modification. A PEST region spans residues 771-804 (LPEAMRMEEEEEGEEEEEEEGGGDSLEVDGVAAT). Disordered stretches follow at residues 775 to 942 (MRME…QTPE) and 977 to 1005 (IPRRATEPSTPRSQAQRYLSSPSGPLRQR). A compositionally biased stretch (acidic residues) spans 778-792 (EEEEEGEEEEEEEGG). A Phosphoserine modification is found at serine 848. The span at 865–875 (PPGPGVPPHPP) shows a compositional bias: pro residues. 3 stretches are compositionally biased toward polar residues: residues 879–891 (SAASHQSSMTSLE), 929–940 (SETSRVSPLTQT), and 983–999 (EPSTPRSQAQRYLSSPS). Position 886 is a phosphoserine (serine 886). Residues 911 to 932 (HLEETWMASPETDSGFVGSETS) are PEST. 2 positions are modified to phosphoserine: serine 997 and serine 1010. Residues 1095 to 1165 (LHQPLQGSPT…RARSSSVPRE (71 aa)) are disordered. A DNA-binding region (a.T hook) is located at residues 1115–1123 (RTRGRPADS). Residues 1135–1147 (STERLPGEPRGEE) show a composition bias toward basic and acidic residues. Residues serine 1172 and serine 1173 each carry the phosphoserine modification. Residues 1180–1211 (LPLFSEKSKTTKDSPQAARDGKRGVGSAGWPD) form a disordered region. Phosphoserine is present on serine 1228. Residues 1252–1329 (AGGAVTGDPL…RPPPGLWYLA (78 aa)) are disordered. Polar residues predominate over residues 1303 to 1317 (SSTPSPKQRSKQAGS). Phosphoserine occurs at positions 1377, 1387, and 1424.

It belongs to the AKNA family. As to quaternary structure, interacts with DCTN1. Interacts with MAPRE1/EB1. Interacts with ODF2. Interacts with CAMSAP3. Phosphorylated; phosphorylation regulates dissociation from and reassembly at the centrosome. In terms of tissue distribution, predominantly expressed by lymphoid tissues. Highly expressed in the spleen, lymph nodes and peripheral blood leukocytes, expressed at lower level in the thymus. Mainly expressed by germinal center B-lymphocytes, a stage in which receptor and ligand interactions are crucial for B-lymphocyte maturation. Expressed by B- and T-lymphocytes, Natural killer cells and CD1a(+)CD14(-) but not CD1a(-)CD14(+) dendritic cells. Weakly or not expressed in fetal liver and in adult bone marrow.

It localises to the cytoplasm. Its subcellular location is the cytoskeleton. The protein localises to the microtubule organizing center. It is found in the centrosome. The protein resides in the centriole. It localises to the nucleus. Functionally, centrosomal protein that plays a key role in cell delamination by regulating microtubule organization. Required for the delamination and retention of neural stem cells from the subventricular zone during neurogenesis. Also regulates the epithelial-to-mesenchymal transition in other epithelial cells. Acts by increasing centrosomal microtubule nucleation and recruiting nucleation factors and minus-end stabilizers, thereby destabilizing microtubules at the adherens junctions and mediating constriction of the apical endfoot. In addition, may also act as a transcription factor that specifically activates the expression of the CD40 receptor and its ligand CD40L/CD154, two cell surface molecules on lymphocytes that are critical for antigen-dependent-B-cell development. Binds to A/T-rich promoters. It is unclear how it can both act as a microtubule organizer and as a transcription factor; additional evidences are required to reconcile these two apparently contradictory functions. The protein is Microtubule organization protein AKNA of Homo sapiens (Human).